A 369-amino-acid chain; its full sequence is Anhydro-N-acetylmuramic acid kinase (369 aa).

Residue 12–19 participates in ATP binding; it reads GTSMDGVD.

Belongs to the anhydro-N-acetylmuramic acid kinase family.

It catalyses the reaction 1,6-anhydro-N-acetyl-beta-muramate + ATP + H2O = N-acetyl-D-muramate 6-phosphate + ADP + H(+). The protein operates within amino-sugar metabolism; 1,6-anhydro-N-acetylmuramate degradation. It functions in the pathway cell wall biogenesis; peptidoglycan recycling. Its function is as follows. Catalyzes the specific phosphorylation of 1,6-anhydro-N-acetylmuramic acid (anhMurNAc) with the simultaneous cleavage of the 1,6-anhydro ring, generating MurNAc-6-P. Is required for the utilization of anhMurNAc either imported from the medium or derived from its own cell wall murein, and thus plays a role in cell wall recycling. The polypeptide is Anhydro-N-acetylmuramic acid kinase (Shewanella putrefaciens (strain CN-32 / ATCC BAA-453)).